We begin with the raw amino-acid sequence, 371 residues long: Capsular polysaccharide phosphotransferase cps12A (371 aa).

It belongs to the stealth family.

In terms of biological role, part of a capsular polysaccharide synthesis locus. This Actinobacillus pleuropneumoniae (Haemophilus pleuropneumoniae) protein is Capsular polysaccharide phosphotransferase cps12A (cps12A).